The chain runs to 526 residues: Probable feruloyl esterase B-2 (526 aa).

The signal sequence occupies residues 1-18; sequence MTKLSLLPLLTLASAVLA. 2 cysteine pairs are disulfide-bonded: cysteine 27–cysteine 74 and cysteine 62–cysteine 113. An N-linked (GlcNAc...) asparagine glycan is attached at asparagine 52. A glycan (N-linked (GlcNAc...) asparagine) is linked at asparagine 137. Disulfide bonds link cysteine 186/cysteine 441, cysteine 255/cysteine 272, cysteine 281/cysteine 291, and cysteine 503/cysteine 525. Serine 187 acts as the Acyl-ester intermediate in catalysis. Residue asparagine 233 is glycosylated (N-linked (GlcNAc...) asparagine). Aspartate 256, aspartate 259, alanine 261, aspartate 263, and isoleucine 265 together coordinate Ca(2+). A glycan (N-linked (GlcNAc...) asparagine) is linked at asparagine 311. Active-site charge relay system residues include aspartate 400 and histidine 440. Asparagine 516 carries N-linked (GlcNAc...) asparagine glycosylation.

It belongs to the tannase family.

The protein localises to the secreted. It carries out the reaction feruloyl-polysaccharide + H2O = ferulate + polysaccharide.. Functionally, involved in degradation of plant cell walls. Hydrolyzes the feruloyl-arabinose ester bond in arabinoxylans as well as the feruloyl-galactose and feruloyl-arabinose ester bonds in pectin. The protein is Probable feruloyl esterase B-2 (faeB-2) of Aspergillus fumigatus (strain CBS 144.89 / FGSC A1163 / CEA10) (Neosartorya fumigata).